The sequence spans 218 residues: Major NAD(P)H-flavin oxidoreductase (218 aa).

Residues 12–16 (RYTSK) and N73 contribute to the FMN site. 154-159 (LARLNI) contributes to the NAD(+) binding site. Residues 165–166 (EG) and 206–208 (KSR) each bind FMN.

It belongs to the nitroreductase family. As to quaternary structure, homodimer. It depends on FMN as a cofactor.

Functionally, involved in bioluminescence. It is a good supplier of reduced flavin mononucleotide (FMNH2) to the bioluminescence reaction. Major FMN reductase. It is capable of using both NADH and NADPH as electron donors. As electron acceptor, FMN is the most effective, FAD is considerably effective, and riboflavin is the least effective. The protein is Major NAD(P)H-flavin oxidoreductase of Aliivibrio fischeri (Vibrio fischeri).